The following is a 232-amino-acid chain: 5'-methylthioadenosine/S-adenosylhomocysteine nucleosidase (232 aa).

Glu-12 (proton acceptor) is an active-site residue. Substrate is bound by residues Gly-78, Val-152, and 173–174; that span reads ME. Residue Asp-197 is the Proton donor of the active site.

Belongs to the PNP/UDP phosphorylase family. MtnN subfamily. Homodimer.

The catalysed reaction is S-adenosyl-L-homocysteine + H2O = S-(5-deoxy-D-ribos-5-yl)-L-homocysteine + adenine. It carries out the reaction S-methyl-5'-thioadenosine + H2O = 5-(methylsulfanyl)-D-ribose + adenine. The enzyme catalyses 5'-deoxyadenosine + H2O = 5-deoxy-D-ribose + adenine. It functions in the pathway amino-acid biosynthesis; L-methionine biosynthesis via salvage pathway; S-methyl-5-thio-alpha-D-ribose 1-phosphate from S-methyl-5'-thioadenosine (hydrolase route): step 1/2. In terms of biological role, catalyzes the irreversible cleavage of the glycosidic bond in both 5'-methylthioadenosine (MTA) and S-adenosylhomocysteine (SAH/AdoHcy) to adenine and the corresponding thioribose, 5'-methylthioribose and S-ribosylhomocysteine, respectively. Also cleaves 5'-deoxyadenosine, a toxic by-product of radical S-adenosylmethionine (SAM) enzymes, into 5-deoxyribose and adenine. Thus, is required for in vivo function of the radical SAM enzymes biotin synthase and lipoic acid synthase, that are inhibited by 5'-deoxyadenosine accumulation. The sequence is that of 5'-methylthioadenosine/S-adenosylhomocysteine nucleosidase from Buchnera aphidicola subsp. Acyrthosiphon pisum (strain APS) (Acyrthosiphon pisum symbiotic bacterium).